The chain runs to 370 residues: Queuine tRNA-ribosyltransferase (370 aa).

The active-site Proton acceptor is Asp93. Substrate-binding positions include 93–97 (DSGGF), Asp147, Gln190, and Gly217. An RNA binding region spans residues 248–254 (GVGTPDY). Asp267 serves as the catalytic Nucleophile. Residues 272-276 (TRVAR) form an RNA binding; important for wobble base 34 recognition region. The Zn(2+) site is built by Cys305, Cys307, Cys310, and His336.

This sequence belongs to the queuine tRNA-ribosyltransferase family. In terms of assembly, homodimer. Within each dimer, one monomer is responsible for RNA recognition and catalysis, while the other monomer binds to the replacement base PreQ1. Zn(2+) serves as cofactor.

The catalysed reaction is 7-aminomethyl-7-carbaguanine + guanosine(34) in tRNA = 7-aminomethyl-7-carbaguanosine(34) in tRNA + guanine. The protein operates within tRNA modification; tRNA-queuosine biosynthesis. In terms of biological role, catalyzes the base-exchange of a guanine (G) residue with the queuine precursor 7-aminomethyl-7-deazaguanine (PreQ1) at position 34 (anticodon wobble position) in tRNAs with GU(N) anticodons (tRNA-Asp, -Asn, -His and -Tyr). Catalysis occurs through a double-displacement mechanism. The nucleophile active site attacks the C1' of nucleotide 34 to detach the guanine base from the RNA, forming a covalent enzyme-RNA intermediate. The proton acceptor active site deprotonates the incoming PreQ1, allowing a nucleophilic attack on the C1' of the ribose to form the product. After dissociation, two additional enzymatic reactions on the tRNA convert PreQ1 to queuine (Q), resulting in the hypermodified nucleoside queuosine (7-(((4,5-cis-dihydroxy-2-cyclopenten-1-yl)amino)methyl)-7-deazaguanosine). The protein is Queuine tRNA-ribosyltransferase of Natranaerobius thermophilus (strain ATCC BAA-1301 / DSM 18059 / JW/NM-WN-LF).